The following is a 270-amino-acid chain: Aliphatic sulfonates import ATP-binding protein SsuB (270 aa).

An ABC transporter domain is found at 17–238 (LAANDLRRTF…VRGSHRLAAL (222 aa)). ATP is bound at residue 49 to 56 (GRSGCGKS). The segment at 250–270 (PGTPPEPEPVAPLPTHLRWAH) is disordered. Residues 251-261 (GTPPEPEPVAP) show a composition bias toward pro residues.

It belongs to the ABC transporter superfamily. Aliphatic sulfonates importer (TC 3.A.1.17.2) family. As to quaternary structure, the complex is composed of two ATP-binding proteins (SsuB), two transmembrane proteins (SsuC) and a solute-binding protein (SsuA).

The protein resides in the cell inner membrane. It catalyses the reaction ATP + H2O + aliphatic sulfonate-[sulfonate-binding protein]Side 1 = ADP + phosphate + aliphatic sulfonateSide 2 + [sulfonate-binding protein]Side 1.. Its function is as follows. Part of the ABC transporter complex SsuABC involved in aliphatic sulfonates import. Responsible for energy coupling to the transport system. The protein is Aliphatic sulfonates import ATP-binding protein SsuB of Pseudomonas entomophila (strain L48).